Consider the following 1255-residue polypeptide: Structural polyprotein (1255 aa).

The interval 1–33 is necessary for nucleocapsid assembly and virus assembly; the sequence is MFPFQPMYPMQPMPYRNPFAAPRRPWFPRTDPF. Residues 33-68 are host transcription inhibition; it reads FLAMQVQELTRSMANLTFKQRRDAPPEGPPAKKPKR. Residues 41-48 carry the Supraphysiological nuclear export signal motif; the sequence is LTRSMANL. The interval 44-119 is disordered; sequence SMANLTFKQR…KKPGKRQRMV (76 aa). Positions 64–68 match the Nuclear localization signal motif; sequence KKPKR. Over residues 80 to 92 the composition is skewed to basic residues; that stretch reads GKKKKNQGKKKAK. The interval 91–127 is binding to the viral RNA; the sequence is AKTGPPNPKAQSGNKKKPNKKPGKRQRMVMKLESDKT. Phosphothreonine is present on threonine 93. Basic residues predominate over residues 104 to 118; the sequence is NKKKPNKKPGKRQRM. The tract at residues 112–126 is ribosome-binding; it reads PGKRQRMVMKLESDK. A Phosphoserine modification is found at serine 124. One can recognise a Peptidase S3 domain in the interval 126–275; that stretch reads KTFPIMLEGK…KYTPENCEQW (150 aa). Phosphothreonine is present on threonine 127. Catalysis depends on histidine 152, which acts as the Charge relay system. Residues 168–173 form an interaction with spike glycoprotein E2 region; sequence KKASKY. Active-site charge relay system residues include aspartate 174 and serine 226. Residues 260 to 264 are interaction with spike glycoprotein E2; it reads EKGVT. Positions 276-287 are functions as an uncleaved signal peptide for the precursor of protein E3/E2; sequence SLVTTMCLLANV. Residues 276–701 are Extracellular-facing; sequence SLVTTMCLLA…HYYHRYPMST (426 aa). 7 disulfide bridges follow: cysteine 282/cysteine 291, cysteine 353/cysteine 457, cysteine 356/cysteine 361, cysteine 424/cysteine 438, cysteine 485/cysteine 600, cysteine 534/cysteine 560, and cysteine 536/cysteine 554. The N-linked (GlcNAc...) asparagine; by host glycan is linked to asparagine 286. Residue asparagine 652 is glycosylated (N-linked (GlcNAc...) asparagine; by host). The chain crosses the membrane as a helical span at residues 702–722; it reads ILGLSICAAIVTVSVAASTWL. Residues 723–757 lie on the Cytoplasmic side of the membrane; it reads FCKSRVSCLTPYRLTPNARMPLCLAVLCCARTARA. Positions 725 to 729 are interaction with the capsid protein; the sequence is KSRVS. 3 S-palmitoyl cysteine; by host lipidation sites follow: cysteine 730, cysteine 750, and cysteine 751. Positions 730 to 750 are transient transmembrane before p62-6K protein processing; the sequence is CLTPYRLTPNARMPLCLAVLC. Cysteine 730 and cysteine 751 are joined by a disulfide. The Extracellular segment spans residues 758-769; that stretch reads ETTWESLDHLWN. Residues 770–790 form a helical membrane-spanning segment; that stretch reads NNQQMFWIQLLIPLAALIVVT. Residue arginine 791 is a topological domain, cytoplasmic. A helical transmembrane segment spans residues 792–812; that stretch reads LLKCVCCVVPFLVVAGAAGAG. The Extracellular portion of the chain corresponds to 813 to 1225; that stretch reads AYEHATTMPS…SKTAWTWLTS (413 aa). Intrachain disulfides connect cysteine 862–cysteine 927, cysteine 875–cysteine 907, cysteine 876–cysteine 909, and cysteine 881–cysteine 891. The segment at 897 to 914 is E1 fusion peptide loop; it reads VYPFMWGGAYCFCDTENT. Residues asparagine 947 and asparagine 1083 are each glycosylated (N-linked (GlcNAc...) asparagine; by host). 4 cysteine pairs are disulfide-bonded: cysteine 1072–cysteine 1084, cysteine 1114–cysteine 1189, cysteine 1119–cysteine 1193, and cysteine 1141–cysteine 1183. A helical transmembrane segment spans residues 1226–1246; that stretch reads LLGGSAVIIIIGLVLATIVAM. The Cytoplasmic segment spans residues 1247 to 1255; it reads YVLTNQKHN.

As to quaternary structure, homodimer. Homomultimer. Interacts with host karyopherin KPNA4; this interaction allows the nuclear import of the viral capsid protein. Interacts with spike glycoprotein E2. Interacts with host IRAK1; the interaction leads to inhibition of IRAK1-dependent signaling. Part of a tetrameric complex composed of host CRM1, host importin alpha/beta dimer and the viral capsid; this complex blocks the receptor-mediated transport through the nuclear pore. Interacts with host phosphatase PPP1CA; this interaction dephosphorylates the capsid protein, which increases its ability to bind to the viral genome. The precursor of protein E3/E2 and E1 form a heterodimer shortly after synthesis. In terms of assembly, interacts with spike glycoprotein E2. The precursor of protein E3/E2 and E1 form a heterodimer shortly after synthesis. Processing of the precursor of protein E3/E2 into E2 and E3 results in a heterodimer of the spike glycoproteins E2 and E1. Spike at virion surface are constituted of three E2-E1 heterodimers. After target cell attachment and endocytosis, E1 change conformation to form homotrimers. Interacts with 6K protein. Interacts with host LDLRAD3; this interaction mediates viral entry to the host cell. As to quaternary structure, interacts with spike glycoprotein E1. Processing of the precursor of protein E3/E2 into E2 and E3 results in a heterodimer of the spike glycoproteins E2 and E1. Spike at virion surface are constituted of a trimer of E2-E1 heterodimers. Interacts with 6K protein. Interacts with host LDLRAD3; this interaction mediates viral entry to the host cell. Oligomer. Interacts with spike glycoprotein E1. Interacts with spike glycoprotein E2. Post-translationally, structural polyprotein: Specific enzymatic cleavages in vivo yield mature proteins. Capsid protein is auto-cleaved during polyprotein translation, unmasking a signal peptide at the N-terminus of the precursor of E3/E2. The remaining polyprotein is then targeted to the host endoplasmic reticulum, where host signal peptidase cleaves it into pE2, 6K and E1 proteins. pE2 is further processed to mature E3 and E2 by host furin in trans-Golgi vesicle. Phosphorylated on serine and threonine residues. In terms of processing, palmitoylated via thioester bonds. These palmitoylations may induce disruption of the C-terminus transmembrane. This would result in the reorientation of E2 C-terminus from lumenal to cytoplasmic side. Post-translationally, N-glycosylated. Palmitoylated via thioester bonds.

The protein resides in the virion. It localises to the host cytoplasm. It is found in the host cell membrane. Its subcellular location is the host nucleus. The protein localises to the virion membrane. The protein resides in the host Golgi apparatus. It localises to the host trans-Golgi network. It is found in the host endoplasmic reticulum. It carries out the reaction Autocatalytic release of the core protein from the N-terminus of the togavirus structural polyprotein by hydrolysis of a -Trp-|-Ser- bond.. Functionally, forms an icosahedral capsid with a T=4 symmetry composed of 240 copies of the capsid protein surrounded by a lipid membrane through which penetrate 80 spikes composed of trimers of E1-E2 heterodimers. The capsid protein binds to the viral RNA genome at a site adjacent to a ribosome binding site for viral genome translation following genome release. Possesses a protease activity that results in its autocatalytic cleavage from the nascent structural protein. Following its self-cleavage, the capsid protein transiently associates with ribosomes, and within several minutes the protein binds to viral RNA and rapidly assembles into icosahedric core particles. The resulting nucleocapsid eventually associates with the cytoplasmic domain of the spike glycoprotein E2 at the cell membrane, leading to budding and formation of mature virions. In case of infection, new virions attach to target cells and after clathrin-mediated endocytosis their membrane fuses with the host endosomal membrane. This leads to the release of the nucleocapsid into the cytoplasm, followed by an uncoating event necessary for the genomic RNA to become accessible. The uncoating might be triggered by the interaction of capsid proteins with ribosomes. Binding of ribosomes would release the genomic RNA since the same region is genomic RNA-binding and ribosome-binding. Specifically inhibits interleukin-1 receptor-associated kinase 1/IRAK1-dependent signaling during viral entry, representing a means by which the alphaviruses may evade innate immune detection and activation prior to viral gene expression. Inhibits host transcription. Forms a tetrameric complex with XPO1/CRM1 and the nuclear import receptor importin. This complex blocks the central channel of host nuclear pores thereby inhibiting the receptor-mediated nuclear transport and thus the host mRNA and rRNA transcription. The inhibition of transcription is linked to a cytopathic effect on the host cell. Its function is as follows. Provides the signal sequence for the translocation of the precursor of protein E3/E2 to the host endoplasmic reticulum. Furin-cleaved E3 remains associated with spike glycoprotein E1 and mediates pH protection of the latter during the transport via the secretory pathway. After virion release from the host cell, the assembly protein E3 is gradually released in the extracellular space. In terms of biological role, plays a role in viral attachment to target host cell, by binding to the cell receptor LDLRAD3. Synthesized as a p62 precursor which is processed by furin at the cell membrane just before virion budding, giving rise to E2-E1 heterodimer. The p62-E1 heterodimer is stable, whereas E2-E1 is unstable and dissociate at low pH. p62 is processed at the last step, presumably to avoid E1 fusion activation before its final export to cell surface. E2 C-terminus contains a transitory transmembrane that would be disrupted by palmitoylation, resulting in reorientation of the C-terminal tail from lumenal to cytoplasmic side. This step is critical since E2 C-terminus is involved in budding by interacting with capsid proteins. This release of E2 C-terminus in cytoplasm occurs lately in protein export, and precludes premature assembly of particles at the endoplasmic reticulum membrane. Acts as a viroporin that participates in virus glycoprotein processing and transport to the plasma membrane, cell permeabilization and budding of viral particles. Disrupts the calcium homeostasis of the cell, probably at the endoplasmic reticulum level. This leads to cytoplasmic calcium elevation. Because of its lipophilic properties, the 6K protein is postulated to influence the selection of lipids that interact with the transmembrane domains of the glycoproteins, which, in turn, affects the deformability of the bilayer required for the extreme curvature that occurs as budding proceeds. Present in low amount in virions, about 3% compared to viral glycoproteins. Functionally, class II viral fusion protein. Fusion activity is inactive as long as E1 is bound to E2 in mature virion. After virus attachment to cell receptor LDLRAD3 and endocytosis, acidification of the endosome induce dissociation of E1/E2 heterodimer and concomitant trimerization of the E1 subunits. This E1 trimer is fusion active, and promotes release of viral nucleocapsid in cytoplasm after endosome and viral membrane fusion. Efficient fusion requires the presence of cholesterol and sphingolipid in the target membrane. In Venezuelan equine encephalitis virus (strain P676) (VEEV), this protein is Structural polyprotein.